Reading from the N-terminus, the 813-residue chain is Sodium/hydrogen exchanger 2 (813 aa).

7 consecutive transmembrane segments (helical) span residues 108 to 128 (IVPESCLLIMVGLLLGGIIFG), 139 to 159 (TDVFFLYLLPPIVLDAGYFMP), 170 to 190 (IFWYAVVGTLWNSIGIGLSLF), 210 to 230 (LFGSLISAVDPVAVLAVFENI), 238 to 258 (ILVFGESLLNDAVTVVLYNLF), 279 to 299 (FFVVGIGGVLIGILLGFIAAF), and 309 to 329 (VIEPLFVFLYSYLSYITAEMF). N-linked (GlcNAc...) asparagine glycosylation occurs at Asn-351. Helical transmembrane passes span 362-382 (YFMKMLSSVSETLIFIFMGVS), 393-413 (AFVCFTLAFCLIWRALGVFVL), 431-451 (FIIAYGGLRGAICFALVFLLP), and 460-480 (LFITAAIVVIFFTVFILGITI). The span at 649 to 661 (LRKDNSLNRERRA) shows a compositional bias: basic and acidic residues. 2 disordered regions span residues 649–709 (LRKD…NLQP) and 736–813 (DVGS…NEKP). Over residues 687 to 696 (VSNADGNSSD) the composition is skewed to polar residues. Basic and acidic residues-rich tracts occupy residues 770 to 781 (KDQRFGRGREDS) and 797 to 813 (RASEPGNRKGRLGNEKP).

The protein belongs to the monovalent cation:proton antiporter 1 (CPA1) transporter (TC 2.A.36) family. As to quaternary structure, interacts with CHP1 and CHP2. Predominantly in small intestine, colon, and stomach, with much lower levels in skeletal muscle, kidney, brain, testis, uterus, heart and lung.

The protein resides in the apical cell membrane. The catalysed reaction is Na(+)(in) + H(+)(out) = Na(+)(out) + H(+)(in). Its activity is regulated as follows. Li(+) activates Na(+)/H(+) exchanger. Its function is as follows. Plasma membrane Na(+)/H(+) antiporter. Mediates the electroneutral exchange of intracellular H(+) ions for extracellular Na(+). Major apical Na(+)/H(+) exchanger in the base of the colonic crypt. Controls in the colonic crypt intracellular pH (pHi) to direct colonic epithelial cell differentiation into the absorptive enterocyte lineage at the expense of the secretory lineage. This Rattus norvegicus (Rat) protein is Sodium/hydrogen exchanger 2 (Slc9a2).